We begin with the raw amino-acid sequence, 65 residues long: Sodium channel alpha-toxin Acra4 (65 aa).

Positions 2–63 (RDGYIVDDKN…PIKDPSYKCH (62 aa)) constitute an LCN-type CS-alpha/beta domain. 4 disulfide bridges follow: C12–C62, C16–C34, C20–C44, and C24–C46. A propeptide (removed by a carboxypeptidase) is located at residue R65.

It belongs to the long (4 C-C) scorpion toxin superfamily. Sodium channel inhibitor family. Alpha subfamily. Expressed by the venom gland.

The protein localises to the secreted. Its function is as follows. Alpha toxins bind voltage-independently at site-3 of sodium channels (Nav) and inhibit the inactivation of the activated channels, thereby blocking neuronal transmission. Electrophysiological studies of this were performed using sodium-channels expressed in F11 cell culture, by patch-clamp recordings. Affinity of this toxin toward sodium channels in F11 cell line is in the order of 1 uM concentration. The polypeptide is Sodium channel alpha-toxin Acra4 (Androctonus crassicauda (Arabian fat-tailed scorpion)).